The sequence spans 238 residues: RAD9, HUS1, RAD1-interacting nuclear orphan protein 1 (238 aa).

Basic residues predominate over residues Met1–Pro10. A disordered region spans residues Met1–Ala31. A Phosphoserine; by PLK1 modification is found at Ser51. An RAD1-binding motif motif is present at residues Ser55–Phe61. The tract at residues Lys74–Glu105 is disordered. Residues His75 to Arg84 are compositionally biased toward basic residues. The D-box motif lies at Arg125 to Leu132. Residues Gln174–Ser178 carry the KEN box motif.

In terms of assembly, interacts (when phosphorylated by PLK1) with POLQ; promoting POLQ recruitment to DNA damage sites. Interacts with RAD1; interaction is direct and promotes association with the 9-1-1 (RAD9-RAD1-HUS1) complex. Interacts with RAD18. Interacts with TOPBP1. Interacts with UBE2N. Post-translationally, phosphorylated at Ser-51 by PLK1, promoting interaction with polymerase theta (POLQ). In terms of processing, ubiquitinated and degraded by the APC/C complex upon mitotic exit. In terms of tissue distribution, weakly expressed in testis, prostate, ovary, thymus and small intestine. Expressed strongly in breast cancer cells.

It localises to the nucleus. Its subcellular location is the chromosome. Involved in microhomology-mediated end-joining (MMEJ) DNA repair by promoting recruitment of polymerase theta (POLQ) to DNA damage sites during mitosis. MMEJ is an alternative non-homologous end-joining (NHEJ) machinery that takes place during mitosis to repair double-strand breaks in DNA that originate in S-phase. Accumulates in M-phase; following phosphorylation by PLK1, interacts with POLQ, enabling its recruitment to double-strand breaks for subsequent repair. Also involved in the DNA damage response (DDR) signaling in response to genotoxic stresses such as ionizing radiation (IR) during the S phase. Recruited to sites of DNA damage through interaction with the 9-1-1 cell-cycle checkpoint response complex and TOPBP1 in a ATR-dependent manner. Required for the progression of the G1 to S phase transition. Plays a role in the stimulation of CHEK1 phosphorylation. This is RAD9, HUS1, RAD1-interacting nuclear orphan protein 1 from Homo sapiens (Human).